Here is a 250-residue protein sequence, read N- to C-terminus: Cellulose biosynthesis protein BcsQ (250 aa).

9–16 (VRGGVGTT) contacts ATP.

The protein belongs to the BcsQ family.

The protein resides in the cytoplasm. Functionally, essential for cellulose biosynthesis, shown for strain 1094, a commensal, natural cellulose producer. Also shown in strain W3110 which has a restored reading frame (TAG stop codon to TTG for amino acid 6, called strain AR3110), this protein. May play a role in subcellular localization of an active cellulose biosynthesis apparatus at the bacterial cell pole. The combination of cellulose and the curli fiber network confer cohesion, elasticity and tissue-like properties to colonies. This Escherichia coli (strain K12) protein is Cellulose biosynthesis protein BcsQ.